The primary structure comprises 144 residues: Large ribosomal subunit protein uL15 (144 aa).

Residues 1 to 56 (MELNNLKPAAGAKHAKRRVGRGIGSGLGKTAGRGHKGQKSRSGGFHKVGFEGGQMP) are disordered. Residues 21 to 31 (RGIGSGLGKTA) are compositionally biased toward gly residues.

This sequence belongs to the universal ribosomal protein uL15 family. In terms of assembly, part of the 50S ribosomal subunit.

Binds to the 23S rRNA. The protein is Large ribosomal subunit protein uL15 of Burkholderia multivorans (strain ATCC 17616 / 249).